Reading from the N-terminus, the 348-residue chain is Dihydroorotase (348 aa).

Zn(2+)-binding residues include histidine 17 and histidine 19. Substrate-binding positions include 19 to 21 (HLR) and asparagine 45. Zn(2+) is bound by residues lysine 103, histidine 140, and histidine 178. At lysine 103 the chain carries N6-carboxylysine. Residue histidine 140 coordinates substrate. Leucine 223 contacts substrate. Aspartate 251 contributes to the Zn(2+) binding site. The active site involves aspartate 251. Positions 255 and 267 each coordinate substrate.

The protein belongs to the metallo-dependent hydrolases superfamily. DHOase family. Class II DHOase subfamily. As to quaternary structure, homodimer. The cofactor is Zn(2+).

The catalysed reaction is (S)-dihydroorotate + H2O = N-carbamoyl-L-aspartate + H(+). The protein operates within pyrimidine metabolism; UMP biosynthesis via de novo pathway; (S)-dihydroorotate from bicarbonate: step 3/3. Its function is as follows. Catalyzes the reversible cyclization of carbamoyl aspartate to dihydroorotate. In Shigella flexneri, this protein is Dihydroorotase.